Consider the following 154-residue polypeptide: Ribonuclease H (154 aa).

The RNase H type-1 domain occupies 1–141; sequence MKRIEAYTDG…ADELARAGME (141 aa). The Mg(2+) site is built by D9, E47, D69, and D133.

This sequence belongs to the RNase H family. Monomer. Mg(2+) is required as a cofactor.

It localises to the cytoplasm. The catalysed reaction is Endonucleolytic cleavage to 5'-phosphomonoester.. Its function is as follows. Endonuclease that specifically degrades the RNA of RNA-DNA hybrids. This is Ribonuclease H from Brucella abortus (strain 2308).